Consider the following 135-residue polypeptide: Fluoride-specific ion channel FluC (135 aa).

Helical transmembrane passes span 12-32, 42-62, 70-90, and 106-126; these read FLVI…LGLS, LGTL…VGIF, LAWK…FSTF, and AIGL…LGLL. Na(+)-binding residues include Gly-82 and Thr-85.

The protein belongs to the fluoride channel Fluc/FEX (TC 1.A.43) family.

Its subcellular location is the cell inner membrane. It carries out the reaction fluoride(in) = fluoride(out). With respect to regulation, na(+) is not transported, but it plays an essential structural role and its presence is essential for fluoride channel function. Functionally, fluoride-specific ion channel. Important for reducing fluoride concentration in the cell, thus reducing its toxicity. This Dechloromonas aromatica (strain RCB) protein is Fluoride-specific ion channel FluC.